The sequence spans 182 residues: ATP synthase subunit b, chloroplastic (182 aa).

Residues 29 to 47 form a helical membrane-spanning segment; sequence IINLALLIVLVINVAKDVL.

The protein belongs to the ATPase B chain family. F-type ATPases have 2 components, F(1) - the catalytic core - and F(0) - the membrane proton channel. F(1) has five subunits: alpha(3), beta(3), gamma(1), delta(1), epsilon(1). F(0) has four main subunits: a(1), b(1), b'(1) and c(10-14). The alpha and beta chains form an alternating ring which encloses part of the gamma chain. F(1) is attached to F(0) by a central stalk formed by the gamma and epsilon chains, while a peripheral stalk is formed by the delta, b and b' chains.

The protein localises to the plastid. Its subcellular location is the chloroplast thylakoid membrane. F(1)F(0) ATP synthase produces ATP from ADP in the presence of a proton or sodium gradient. F-type ATPases consist of two structural domains, F(1) containing the extramembraneous catalytic core and F(0) containing the membrane proton channel, linked together by a central stalk and a peripheral stalk. During catalysis, ATP synthesis in the catalytic domain of F(1) is coupled via a rotary mechanism of the central stalk subunits to proton translocation. Functionally, component of the F(0) channel, it forms part of the peripheral stalk, linking F(1) to F(0). This is ATP synthase subunit b, chloroplastic from Heterosigma akashiwo (strain NIES-293 / 8280G21-1).